Reading from the N-terminus, the 484-residue chain is Replication factor C large subunit (484 aa).

46-53 (GPPGSGKT) contributes to the ATP binding site. Basic and acidic residues-rich tracts occupy residues 419-432 (VKTE…KTKE), 442-451 (RISEPPEPLK), and 459-478 (KSVE…KKQA). The interval 419–484 (VKTETPKKKE…KKQATLDSFF (66 aa)) is disordered.

Belongs to the activator 1 small subunits family. RfcL subfamily. As to quaternary structure, heteromultimer composed of small subunits (RfcS) and large subunits (RfcL).

Part of the RFC clamp loader complex which loads the PCNA sliding clamp onto DNA. This Methanococcus maripaludis (strain C5 / ATCC BAA-1333) protein is Replication factor C large subunit.